Reading from the N-terminus, the 356-residue chain is 1-deoxy-D-xylulose 5-phosphate reductoisomerase (356 aa).

NADPH contacts are provided by Thr-7, Gly-8, Ser-9, Ile-10, Gly-31, Asn-33, and Asn-111. Position 112 (Lys-112) interacts with 1-deoxy-D-xylulose 5-phosphate. Glu-113 contributes to the NADPH binding site. Residue Asp-131 coordinates Mn(2+). 1-deoxy-D-xylulose 5-phosphate-binding residues include Ser-132, Glu-133, Ser-155, and His-178. Glu-133 is a binding site for Mn(2+). Gly-184 is an NADPH binding site. 1-deoxy-D-xylulose 5-phosphate is bound by residues Ser-191, Asn-196, Lys-197, and Glu-200. A Mn(2+)-binding site is contributed by Glu-200.

It belongs to the DXR family. It depends on Mg(2+) as a cofactor. Requires Mn(2+) as cofactor.

The catalysed reaction is 2-C-methyl-D-erythritol 4-phosphate + NADP(+) = 1-deoxy-D-xylulose 5-phosphate + NADPH + H(+). It participates in isoprenoid biosynthesis; isopentenyl diphosphate biosynthesis via DXP pathway; isopentenyl diphosphate from 1-deoxy-D-xylulose 5-phosphate: step 1/6. Its function is as follows. Catalyzes the NADPH-dependent rearrangement and reduction of 1-deoxy-D-xylulose-5-phosphate (DXP) to 2-C-methyl-D-erythritol 4-phosphate (MEP). The sequence is that of 1-deoxy-D-xylulose 5-phosphate reductoisomerase from Campylobacter jejuni subsp. doylei (strain ATCC BAA-1458 / RM4099 / 269.97).